The following is a 583-amino-acid chain: MLO-like protein 6 (583 aa).

Residues 1-15 (MADQVKEKTLEETST) are Extracellular-facing. A helical transmembrane segment spans residues 16–36 (WAVAVVCFVLLLISIVIEKLI). Residues 37–61 (HKIGSWFKKKNKKALYEALEKVKAE) are Cytoplasmic-facing. The helical transmembrane segment at 62–82 (LMLMGFISLLLTIGQGYISNI) threads the bilayer. Residues 83–161 (CIPKNIAASM…VSAYGMHQLH (79 aa)) are Extracellular-facing. The helical transmembrane segment at 162 to 182 (IFIFVLAVCHVIYCIVTYALG) threads the bilayer. At 183-284 (KTKMRRWKKW…KYIQRSLEED (102 aa)) the chain is on the cytoplasmic side. Residues 285–305 (FKTIVEINPVIWFIAVLFLLT) form a helical membrane-spanning segment. The Extracellular segment spans residues 306 to 314 (NTNGLNSYL). Residues 315–335 (WLPFIPFIVILIVGTKLQVII) form a helical membrane-spanning segment. Residues 336-368 (TKLGLRIQEKGDVVKGTPLVQPGDHFFWFGRPR) lie on the Cytoplasmic side of the membrane. Residues 369 to 389 (FILFLIHLVLFTNAFQLAFFV) form a helical membrane-spanning segment. Residues 390–411 (WSTYEFGLKNCFHESRVDVIIR) are Extracellular-facing. A helical membrane pass occupies residues 412–432 (ISIGLLVQILCSYVTLPLYAL). Over 433-583 (VTQMGSKMKP…ISLRDFSFKR (151 aa)) the chain is Cytoplasmic. The interval 447–468 (ERVATALKSWHHTAKKNIKHGR) is calmodulin-binding. Residues 461 to 583 (KKNIKHGRTS…ISLRDFSFKR (123 aa)) form a disordered region. Residues 470–484 (SESTTPFSSRPTTPT) show a composition bias toward low complexity. Over residues 541 to 551 (RFGEEESEKKF) the composition is skewed to basic and acidic residues.

Belongs to the MLO family.

The protein resides in the membrane. Its function is as follows. May be involved in modulation of pathogen defense and leaf cell death. Activity seems to be regulated by Ca(2+)-dependent calmodulin binding and seems not to require heterotrimeric G proteins. This is MLO-like protein 6 (MLO6) from Arabidopsis thaliana (Mouse-ear cress).